The following is a 312-amino-acid chain: DNA-directed RNA polymerase subunit alpha (312 aa).

Residues Met1 to Asp226 are alpha N-terminal domain (alpha-NTD). An alpha C-terminal domain (alpha-CTD) region spans residues Lys243–Asp312.

Belongs to the RNA polymerase alpha chain family. As to quaternary structure, homodimer. The RNAP catalytic core consists of 2 alpha, 1 beta, 1 beta' and 1 omega subunit. When a sigma factor is associated with the core the holoenzyme is formed, which can initiate transcription.

It catalyses the reaction RNA(n) + a ribonucleoside 5'-triphosphate = RNA(n+1) + diphosphate. In terms of biological role, DNA-dependent RNA polymerase catalyzes the transcription of DNA into RNA using the four ribonucleoside triphosphates as substrates. The sequence is that of DNA-directed RNA polymerase subunit alpha from Lactobacillus delbrueckii subsp. bulgaricus (strain ATCC BAA-365 / Lb-18).